Reading from the N-terminus, the 636-residue chain is Chaperone protein HtpG (636 aa).

The tract at residues 1–329 is a; substrate-binding; the sequence is MSKEHGAAAE…TEDLPLNISR (329 aa). The segment at 330-550 is b; it reads ETLQENALIA…DGGMTASMEK (221 aa). Residues 551–636 are c; sequence LMRVMNKDES…TGWYAEVRKL (86 aa).

The protein belongs to the heat shock protein 90 family. In terms of assembly, homodimer.

It is found in the cytoplasm. Its function is as follows. Molecular chaperone. Has ATPase activity. The protein is Chaperone protein HtpG of Oleidesulfovibrio alaskensis (strain ATCC BAA-1058 / DSM 17464 / G20) (Desulfovibrio alaskensis).